The sequence spans 32 residues: Alpha-conotoxin RgIA (32 aa).

The propeptide occupies 1 to 19 (SNKRKNAAMLDMIAQHAIR). 2 cysteine pairs are disulfide-bonded: C21–C27 and C22–C31.

Belongs to the conotoxin A superfamily. The disulfide bond CysI-CysIII is important for alpha-9-alpha-10 subtype inhibition, whereas the bond CysII-CysIV contributes to GABA(B) modulation. In terms of tissue distribution, expressed by the venom duct.

It localises to the secreted. Its function is as follows. This toxin target two types of receptors, the nicotinic acetylcholine receptor (nAChR) and the G-protein-coupled receptor GABA(B). It specifically inhibits the alpha-9-alpha-10/CHRNA9-CHRNA10 nAChR, with preference for rat receptors. It interacts with the alpha-10(+)/alpha-9(-)interface of the receptor. It shows a two order of magnitude species difference potency for the rat versus human alpha-9-alpha-10 nAChR, due to the Thr-86 located in the alpha-9 nAChR subunit. This toxin also shows inhibition of high voltage-activated (HVA) calcium channels (Cav2.2) by acting on GABA(B) receptors (GABBR1 and GABBR2). In vivo, this toxin produces an acute antinociceptive effect in peripheral nerve-injured rats, which may be related to the inhibition of immune cell buildup at the site of nerve injury. In addition, when intramuscularly injected into rats following chronic constriction injury of the sciatic nerve, this toxin protects peripheral nervous tissues as well as prevents central maladaptive plasticity by inhibiting glial cell activation. This Conus regius (Crown cone) protein is Alpha-conotoxin RgIA.